We begin with the raw amino-acid sequence, 396 residues long: MRFNTLDDMDLAGKLVLTRVDINVPVDGDTVTDATRITRIVPTIKDILAKGGRPVMLAHFGRPKGAYVPEMSLRVTVPALEQALGQPVNFIERPDRATLDALPEGTITLIENTRFSAMEEANDPKMAGFLASLGDVYCNDAFSAAHRAHASTEGVARLLPSCAGRLMEAELSALEAALGAPQRPVVAVVGGAKVSTKLDLLGNLIEKVDTIIIGGGMANTFLAAQGVQVGTSLCEHDLGDTARAIMQKAAAANCTLILPGDIVVAAEFKAGAANAVYDVDACPADQMILDAGPKTVETIAATFNTAKTVIWNGPLGAFEIAPFDAATVTAARAAAEETQAGKLISVAGGGDTVAALNHAGVADQFTYISTAGGAFLEWMEGKTLPGVAALEAAKPA.

Residues 21–23 (DIN), arginine 36, 59–62 (HFGR), arginine 114, and arginine 147 each bind substrate. ATP-binding positions include lysine 197, glutamate 319, and 349-352 (GGDT).

It belongs to the phosphoglycerate kinase family. As to quaternary structure, monomer.

The protein localises to the cytoplasm. It carries out the reaction (2R)-3-phosphoglycerate + ATP = (2R)-3-phospho-glyceroyl phosphate + ADP. Its pathway is carbohydrate degradation; glycolysis; pyruvate from D-glyceraldehyde 3-phosphate: step 2/5. In Jannaschia sp. (strain CCS1), this protein is Phosphoglycerate kinase.